Here is a 269-residue protein sequence, read N- to C-terminus: Eukaryotic translation initiation factor 3 subunit G-1 (269 aa).

In terms of domain architecture, RRM spans 188 to 266 (AAIRISNLSE…LILSVEWSKP (79 aa)).

Belongs to the eIF-3 subunit G family. In terms of assembly, component of the eukaryotic translation initiation factor 3 (eIF-3) complex. The eIF-3 complex interacts with pix.

It is found in the cytoplasm. Its function is as follows. RNA-binding component of the eukaryotic translation initiation factor 3 (eIF-3) complex, which is involved in protein synthesis of a specialized repertoire of mRNAs and, together with other initiation factors, stimulates binding of mRNA and methionyl-tRNAi to the 40S ribosome. The eIF-3 complex specifically targets and initiates translation of a subset of mRNAs involved in cell proliferation. This subunit can bind 18S rRNA. The protein is Eukaryotic translation initiation factor 3 subunit G-1 of Drosophila willistoni (Fruit fly).